Reading from the N-terminus, the 529-residue chain is T-complex protein 1 subunit delta (529 aa).

This sequence belongs to the TCP-1 chaperonin family. In terms of assembly, heterooligomeric complex of about 850 to 900 kDa that forms two stacked rings, 12 to 16 nm in diameter.

The protein resides in the cytoplasm. Molecular chaperone; assists the folding of proteins upon ATP hydrolysis. Known to play a role, in vitro, in the folding of actin and tubulin. The polypeptide is T-complex protein 1 subunit delta (CCT4) (Eremothecium gossypii (strain ATCC 10895 / CBS 109.51 / FGSC 9923 / NRRL Y-1056) (Yeast)).